A 195-amino-acid polypeptide reads, in one-letter code: dITP/XTP pyrophosphatase (195 aa).

Substrate is bound at residue 8-13 (TNNQGK). Residues Glu39 and Asp68 each contribute to the Mg(2+) site. Residue Asp68 is the Proton acceptor of the active site. Residues Ser69, 149-152 (FGYD), Lys172, and 177-178 (HR) each bind substrate.

Belongs to the HAM1 NTPase family. As to quaternary structure, homodimer. Mg(2+) serves as cofactor.

The enzyme catalyses XTP + H2O = XMP + diphosphate + H(+). It catalyses the reaction dITP + H2O = dIMP + diphosphate + H(+). The catalysed reaction is ITP + H2O = IMP + diphosphate + H(+). Functionally, pyrophosphatase that catalyzes the hydrolysis of nucleoside triphosphates to their monophosphate derivatives, with a high preference for the non-canonical purine nucleotides XTP (xanthosine triphosphate), dITP (deoxyinosine triphosphate) and ITP. Seems to function as a house-cleaning enzyme that removes non-canonical purine nucleotides from the nucleotide pool, thus preventing their incorporation into DNA/RNA and avoiding chromosomal lesions. The protein is dITP/XTP pyrophosphatase of Staphylococcus epidermidis (strain ATCC 35984 / DSM 28319 / BCRC 17069 / CCUG 31568 / BM 3577 / RP62A).